An 805-amino-acid chain; its full sequence is Mitochondrial inner membrane m-AAA protease component AFG3L2 (805 aa).

A mitochondrion-targeting transit peptide spans Met1–Met39. A propeptide spans Leu40 to Cys67 (removed in mature form). The disordered stretch occupies residues Phe74–His127. Over residues Lys86–Lys101 the composition is skewed to basic and acidic residues. Positions Ser109–Lys118 are enriched in gly residues. N6-succinyllysine is present on Lys118. 2 helical membrane passes run Phe144–Phe164 and Gly252–Ile272. Positions 311, 312, 353, 354, 355, 356, 357, and 491 each coordinate ATP. Zn(2+) is bound at residue His575. The active site involves Glu576. Zn(2+) is bound by residues His579 and Asp650. Residues Phe760–Ala805 are disordered. The span at Gly776–Ser787 shows a compositional bias: basic and acidic residues.

This sequence in the N-terminal section; belongs to the AAA ATPase family. The protein in the C-terminal section; belongs to the peptidase M41 family. As to quaternary structure, homohexamer. Forms heterohexamers with SPG7. The m-AAA protease is either composed of homohexamers of AFG3L2 or heterohexamers of AFG3L2 and SPG7. Interacts with MAIP1. Interacts with DNAJC19. Interacts with PHB2. Requires Zn(2+) as cofactor. In terms of processing, upon import into the mitochondrion, the N-terminal transit peptide is cleaved to generate an intermediate form which undergoes autocatalytic proteolytic processing to generate the proteolytically active mature form.

It is found in the mitochondrion inner membrane. It catalyses the reaction ATP + H2O = ADP + phosphate + H(+). In terms of biological role, catalytic component of the m-AAA protease, a protease that plays a key role in proteostasis of inner mitochondrial membrane proteins, and which is essential for axonal and neuron development. AFG3L2 possesses both ATPase and protease activities: the ATPase activity is required to unfold substrates, threading them into the internal proteolytic cavity for hydrolysis into small peptide fragments. The m-AAA protease carries out protein quality control in the inner membrane of the mitochondria by mediating degradation of mistranslated or misfolded polypeptides. The m-AAA protease complex also promotes the processing and maturation of mitochondrial proteins, such as MRPL32/bL32m, PINK1 and SP7. Mediates protein maturation of the mitochondrial ribosomal subunit MRPL32/bL32m by catalyzing the cleavage of the presequence of MRPL32/bL32m prior to assembly into the mitochondrial ribosome. Required for SPG7 maturation into its active mature form after SPG7 cleavage by mitochondrial-processing peptidase (MPP). Required for the maturation of PINK1 into its 52kDa mature form after its cleavage by mitochondrial-processing peptidase (MPP). Acts as a regulator of calcium in neurons by mediating degradation of SMDT1/EMRE before its assembly with the uniporter complex, limiting the availability of SMDT1/EMRE for MCU assembly and promoting efficient assembly of gatekeeper subunits with MCU. Promotes the proteolytic degradation of GHITM upon hyperpolarization of mitochondria: progressive GHITM degradation leads to respiratory complex I degradation and broad reshaping of the mitochondrial proteome by AFG3L2. Also acts as a regulator of mitochondrial glutathione homeostasis by mediating cleavage and degradation of SLC25A39. SLC25A39 cleavage is prevented when SLC25A39 binds iron-sulfur. Involved in the regulation of OMA1-dependent processing of OPA1. May act by mediating processing of OMA1 precursor, participating in OMA1 maturation. The chain is Mitochondrial inner membrane m-AAA protease component AFG3L2 (AFG3L2) from Bos taurus (Bovine).